The following is a 161-amino-acid chain: MTKNKPSTAEKTRLICQNKKAYHDYDILEKFEAGIVLLGTEVKSLREGRANLKDSYARVRKGEVFLQGLHISPYTHASYNNHEPERVRKLLLHAHEIKRLTGKTQERGLALIPLKLYFSKGKVKVELALAQGKKLYDKRESIKRKEENRELDRLRKRRRQE.

Basic and acidic residues predominate over residues 139–153; the sequence is RESIKRKEENRELDR. The segment at 139–161 is disordered; the sequence is RESIKRKEENRELDRLRKRRRQE.

It belongs to the SmpB family.

Its subcellular location is the cytoplasm. Its function is as follows. Required for rescue of stalled ribosomes mediated by trans-translation. Binds to transfer-messenger RNA (tmRNA), required for stable association of tmRNA with ribosomes. tmRNA and SmpB together mimic tRNA shape, replacing the anticodon stem-loop with SmpB. tmRNA is encoded by the ssrA gene; the 2 termini fold to resemble tRNA(Ala) and it encodes a 'tag peptide', a short internal open reading frame. During trans-translation Ala-aminoacylated tmRNA acts like a tRNA, entering the A-site of stalled ribosomes, displacing the stalled mRNA. The ribosome then switches to translate the ORF on the tmRNA; the nascent peptide is terminated with the 'tag peptide' encoded by the tmRNA and targeted for degradation. The ribosome is freed to recommence translation, which seems to be the essential function of trans-translation. This chain is SsrA-binding protein, found in Syntrophobacter fumaroxidans (strain DSM 10017 / MPOB).